The sequence spans 326 residues: Target of rapamycin complex subunit lst8 (326 aa).

WD repeat units follow at residues 1 to 37, 40 to 80, 83 to 122, 126 to 165, 168 to 207, 218 to 257, and 268 to 309; these read MNSNQGTVGSDPVILATAGYDHTVRFWQAHSGICTRT, HQDS…PVIN, GVSKNITSVGFHEDGRWMYTGGEDCMARIWDLRSRNLQCQ, QVNAPINCVFLHPNQAELIVGDQSGAIHIWDLKTDQNEQL, ETDVSINSVHIDPDASYMAAVNSSGNCFVWNLTGGLGEDL, AHKRCALKCKFSPDSTLLATCSADQTCKIWRTSNFSLMTE, and TSRG…REYS.

This sequence belongs to the WD repeat LST8 family. In terms of assembly, part of the mechanistic target of rapamycin complex 1 (mTORC1) which contains MTOR, MLST8 and RPTOR. Component of the mechanistic target of rapamycin complex 2 (mTORC2), consisting in two heterotretramers composed of MTOR, MLST8, RICTOR and MAPKAP1/SIN1.

Its subcellular location is the lysosome membrane. It localises to the cytoplasm. Functionally, subunit of both mTORC1 and mTORC2, which regulates cell growth and survival in response to nutrient and hormonal signals. mTORC1 is activated in response to growth factors or amino acids. In response to nutrients, mTORC1 is recruited to the lysosome membrane and promotes protein, lipid and nucleotide synthesis by phosphorylating several substrates, such as ribosomal protein S6 kinase (RPS6KB1 and RPS6KB2) and EIF4EBP1 (4E-BP1). In the same time, it inhibits catabolic pathways by phosphorylating the autophagy initiation components ULK1 and ATG13, as well as transcription factor TFEB, a master regulators of lysosomal biogenesis and autophagy. The mTORC1 complex is inhibited in response to starvation and amino acid depletion. Within mTORC1, MLST8 interacts directly with MTOR and enhances its kinase activity. In nutrient-poor conditions, stabilizes the MTOR-RPTOR interaction and favors RPTOR-mediated inhibition of MTOR activity. As part of the mTORC2 complex, transduces signals from growth factors to pathways involved in proliferation, cytoskeletal organization, lipogenesis and anabolic output. mTORC2 is also activated by growth factors, but seems to be nutrient-insensitive. In response to growth factors, mTORC2 phosphorylates and activates AGC protein kinase family members, including AKT (AKT1, AKT2 and AKT3), PKC (PRKCA, PRKCB and PRKCE) and SGK1. mTORC2 functions upstream of Rho GTPases to regulate the actin cytoskeleton, probably by activating one or more Rho-type guanine nucleotide exchange factors. mTORC2 promotes the serum-induced formation of stress-fibers or F-actin. Within mTORC2, MLST8 acts as a bridge between MAPKAP1/SIN1 and MTOR. This is Target of rapamycin complex subunit lst8 (mlst8) from Xenopus tropicalis (Western clawed frog).